The following is a 1427-amino-acid chain: DNA-directed RNA polymerase subunit beta' (1427 aa).

Residues Cys70, Cys72, Cys85, and Cys88 each contribute to the Zn(2+) site. Residues Asp461, Asp463, and Asp465 each coordinate Mg(2+). Zn(2+)-binding residues include Cys810, Cys884, Cys891, and Cys894. Disordered regions lie at residues 1044 to 1065 and 1394 to 1427; these read QTDE…AGRG and PEAA…GDEA.

It belongs to the RNA polymerase beta' chain family. The RNAP catalytic core consists of 2 alpha, 1 beta, 1 beta' and 1 omega subunit. When a sigma factor is associated with the core the holoenzyme is formed, which can initiate transcription. The cofactor is Mg(2+). Zn(2+) is required as a cofactor.

It catalyses the reaction RNA(n) + a ribonucleoside 5'-triphosphate = RNA(n+1) + diphosphate. Its function is as follows. DNA-dependent RNA polymerase catalyzes the transcription of DNA into RNA using the four ribonucleoside triphosphates as substrates. The sequence is that of DNA-directed RNA polymerase subunit beta' from Novosphingobium aromaticivorans (strain ATCC 700278 / DSM 12444 / CCUG 56034 / CIP 105152 / NBRC 16084 / F199).